We begin with the raw amino-acid sequence, 38 residues long: Antimicrobial peptide 1 (38 aa).

Post-translationally, disulfide bonds. In terms of tissue distribution, expressed in flowers but not in leaves, seeds or roots (at protein level).

In terms of biological role, antimicrobial peptide. Active against fungal species B.cinerea (IC(50)=5.8 uM) and A.niger (IC(50)=5.6 uM) but not against F.oxysporum, F.graminearum, B.sorokinina and P.debaryanum at concentrations below 10 uM. Active against bacterial species P.syringae, B.subtilis and X.campestris. The protein is Antimicrobial peptide 1 of Taraxacum officinale (Common dandelion).